A 519-amino-acid chain; its full sequence is Halolysin (519 aa).

A signal peptide (tat-type signal) is located at residues 1 to 27 (MAGTPNFDRRSFLRLAAAAGLTGMAGV). Residues 28 to 116 (TSATPGRSPG…AEKNATHEAL (89 aa)) constitute a propeptide that is removed on maturation. The 274-residue stretch at 127–400 (QYAPQQVNAD…SGRVDAANAV (274 aa)) folds into the Peptidase S8 domain. Residues D154, H193, and S347 each act as charge relay system in the active site. Residues 386–425 (STKQGSGRVDAANAVTTDPGDGGGGGGGGSKETTYDGTLS) form a disordered region. The span at 405 to 415 (GDGGGGGGGGS) shows a compositional bias: gly residues.

Belongs to the peptidase S8 family. Predicted to be exported by the Tat system. The position of the signal peptide cleavage has not been experimentally proven.

The protein resides in the secreted. Its function is as follows. Probable secreted halophilic serine protease showing proteolytic activity toward the protease general substrate azocasein. The sequence is that of Halolysin (hly) from Haloferax mediterranei (strain ATCC 33500 / DSM 1411 / JCM 8866 / NBRC 14739 / NCIMB 2177 / R-4) (Halobacterium mediterranei).